A 277-amino-acid chain; its full sequence is Inorganic pyrophosphatase (277 aa).

R80 provides a ligand contact to diphosphate. Mg(2+)-binding residues include D117, D122, and D154.

The protein belongs to the PPase family. Mg(2+) is required as a cofactor.

It is found in the cytoplasm. The enzyme catalyses diphosphate + H2O = 2 phosphate + H(+). In terms of biological role, involved in osmoadaptation. The sequence is that of Inorganic pyrophosphatase (IPP1) from Encephalitozoon cuniculi (strain GB-M1) (Microsporidian parasite).